Consider the following 825-residue polypeptide: BEN domain-containing protein 3 (825 aa).

Residues 1–11 show a composition bias toward acidic residues; the sequence is MNSTEISEDVE. The tract at residues 1 to 35 is disordered; it reads MNSTEISEDVEEVLKNNPVKAEGSDATLDCSRNSR. Lys20 is covalently cross-linked (Glycyl lysine isopeptide (Lys-Gly) (interchain with G-Cter in SUMO); alternate). Lys20 participates in a covalent cross-link: Glycyl lysine isopeptide (Lys-Gly) (interchain with G-Cter in SUMO1); alternate. Lys20 is covalently cross-linked (Glycyl lysine isopeptide (Lys-Gly) (interchain with G-Cter in SUMO2); alternate). Glycyl lysine isopeptide (Lys-Gly) (interchain with G-Cter in SUMO2) cross-links involve residues Lys39, Lys54, Lys56, Lys71, Lys126, Lys127, Lys135, Lys140, Lys156, and Lys174. Residues 52-122 form a disordered region; that stretch reads SSKRKQLDSD…EEEPSTEATV (71 aa). A Nuclear localization signal motif is present at residues 54 to 56; sequence KRK. Positions 239–340 constitute a BEN 1 domain; the sequence is PPPEYQLTAS…DFFSRFWAQR (102 aa). Position 376 is a phosphoserine (Ser376). The region spanning 384–484 is the BEN 2 domain; that stretch reads ASDHVVDTQD…DELEGLGLEG (101 aa). Residue Lys424 forms a Glycyl lysine isopeptide (Lys-Gly) (interchain with G-Cter in SUMO2) linkage. Residue Ser486 is modified to Phosphoserine. A Glycyl lysine isopeptide (Lys-Gly) (interchain with G-Cter in SUMO); alternate cross-link involves residue Lys509. A Glycyl lysine isopeptide (Lys-Gly) (interchain with G-Cter in SUMO2); alternate cross-link involves residue Lys509. A Glycyl lysine isopeptide (Lys-Gly) (interchain with G-Cter in SUMO2) cross-link involves residue Lys525. Residues 547–647 form the BEN 3 domain; the sequence is GSDCLLSKEQ…ERCRRRDTEQ (101 aa). Lys697 is covalently cross-linked (Glycyl lysine isopeptide (Lys-Gly) (interchain with G-Cter in SUMO2)). Residues 712–813 enclose the BEN 4 domain; the sequence is VPSPYLLSDK…ERCRRPNRKK (102 aa).

Homooligomer, probably a homooctamer. Interacts with HDAC2 and HDAC3, but not HDAC1. Interacts with SALL4. Interacts with SMARCA5/SNF2H, BAZ2A/TIP5 and USP21. Interacts with the nucleosome remodeling and histone deacetylase (NuRD) repressor complex. Interacts (via BEN domains 1 and 3) with ERCC6L (via N-terminal TPR repeat); the interaction is direct. In terms of processing, sumoylated at Lys-20 by SUMO1 and at Lys-509 by SUMO1, SUMO2 and SUMO3. Sumoylation probably occurs sequentially, with that of Lys-20 preceding that of Lys-509. It does not alter association with heterochromatin, but is required for the repression of transcription.

It is found in the nucleus. Its subcellular location is the nucleolus. Functionally, transcriptional repressor which associates with the NoRC (nucleolar remodeling complex) complex and plays a key role in repressing rDNA transcription. The sumoylated form modulates the stability of the NoRC complex component BAZ2A/TIP5 by controlling its USP21-mediated deubiquitination. Binds to unmethylated major satellite DNA and is involved in the recruitment of the Polycomb repressive complex 2 (PRC2) to major satellites. Stimulates the ERCC6L translocase and ATPase activities. The sequence is that of BEN domain-containing protein 3 (Bend3) from Mus musculus (Mouse).